Here is a 930-residue protein sequence, read N- to C-terminus: Protein translocase subunit SecA (930 aa).

Residues Gln87, 105-109, and Asp515 contribute to the ATP site; that span reads GEGKT. Zn(2+)-binding residues include Cys914, Cys916, Cys925, and His926.

This sequence belongs to the SecA family. In terms of assembly, monomer and homodimer. Part of the essential Sec protein translocation apparatus which comprises SecA, SecYEG and auxiliary proteins SecDF-YajC and YidC. Zn(2+) is required as a cofactor.

It is found in the cell inner membrane. The protein localises to the cytoplasm. The catalysed reaction is ATP + H2O + cellular proteinSide 1 = ADP + phosphate + cellular proteinSide 2.. Its function is as follows. Part of the Sec protein translocase complex. Interacts with the SecYEG preprotein conducting channel. Has a central role in coupling the hydrolysis of ATP to the transfer of proteins into and across the cell membrane, serving both as a receptor for the preprotein-SecB complex and as an ATP-driven molecular motor driving the stepwise translocation of polypeptide chains across the membrane. The sequence is that of Protein translocase subunit SecA from Cupriavidus metallidurans (strain ATCC 43123 / DSM 2839 / NBRC 102507 / CH34) (Ralstonia metallidurans).